The sequence spans 91 residues: YcgL domain-containing protein Sde_1339 (91 aa).

Residues 1–85 (MIVDIYRSAK…PPESYMNEIP (85 aa)) enclose the YcgL domain. A disordered region spans residues 72-91 (QMPPPPESYMNEIPNDKMPR).

The polypeptide is YcgL domain-containing protein Sde_1339 (Saccharophagus degradans (strain 2-40 / ATCC 43961 / DSM 17024)).